We begin with the raw amino-acid sequence, 364 residues long: Fructose-1,6-bisphosphatase class 1 2 (364 aa).

Residues E101, D123, L125, and D126 each contribute to the Mg(2+) site. Residues 126-129 (DGSS) and N218 each bind substrate. Mg(2+) is bound at residue E290.

Belongs to the FBPase class 1 family. In terms of assembly, homotetramer. It depends on Mg(2+) as a cofactor.

The protein resides in the cytoplasm. The catalysed reaction is beta-D-fructose 1,6-bisphosphate + H2O = beta-D-fructose 6-phosphate + phosphate. Its pathway is carbohydrate biosynthesis; gluconeogenesis. The chain is Fructose-1,6-bisphosphatase class 1 2 from Cupriavidus taiwanensis (strain DSM 17343 / BCRC 17206 / CCUG 44338 / CIP 107171 / LMG 19424 / R1) (Ralstonia taiwanensis (strain LMG 19424)).